A 237-amino-acid chain; its full sequence is Lectin alpha chain (237 aa).

Positions 8 and 10 each coordinate Mn(2+). Asp10, Tyr12, Asn14, and Asp19 together coordinate Ca(2+). Residue Tyr12 participates in a carbohydrate binding. Mn(2+) contacts are provided by Asp19 and His24. 99–100 lines the a carbohydrate pocket; it reads LY. Asp208 serves as a coordination point for Ca(2+). Arg228 is a binding site for a carbohydrate.

It belongs to the leguminous lectin family. As to quaternary structure, homotetramer. The beta and gamma chains are produced by partial proteolytic processing of the lectin alpha chain by an asparaginyl endopeptidase.

The protein resides in the vacuole. The protein localises to the aleurone grain. Functionally, D-mannose/D-glucose-binding lectin with hemagglutinating activity towards rabbit and human erythrocytes. In rats, elicits an acute inflammatory response by inducing neutrophil migration and induces dose-dependent paw edema. In Macropsychanthus wilsonii (Wilson's clusterpea), this protein is Lectin alpha chain.